We begin with the raw amino-acid sequence, 337 residues long: DNA-directed RNA polymerase subunit alpha (337 aa).

The alpha N-terminal domain (alpha-NTD) stretch occupies residues 1–223; it reads MLISQRPALT…ELFGLAQELN (223 aa). Residues 238–337 form an alpha C-terminal domain (alpha-CTD) region; sequence SEHIAAYSMP…IDTEGEDIAE (100 aa).

It belongs to the RNA polymerase alpha chain family. In terms of assembly, homodimer. The RNAP catalytic core consists of 2 alpha, 1 beta, 1 beta' and 1 omega subunit. When a sigma factor is associated with the core the holoenzyme is formed, which can initiate transcription.

The enzyme catalyses RNA(n) + a ribonucleoside 5'-triphosphate = RNA(n+1) + diphosphate. Its function is as follows. DNA-dependent RNA polymerase catalyzes the transcription of DNA into RNA using the four ribonucleoside triphosphates as substrates. This is DNA-directed RNA polymerase subunit alpha from Corynebacterium jeikeium (strain K411).